The primary structure comprises 122 residues: MSSNDNSGIVNTCFLTTRLPAWAGVRQDEVGSDVNGLPIIPSNSMQIRSRAATTDAATEPSTRQGLNLLRSVTELNESIDELQQKMTELEKRLKIMEEKIEEIKLALANPLIENPHDGNFIV.

A coiled-coil region spans residues 72–106 (VTELNESIDELQQKMTELEKRLKIMEEKIEEIKLA).

Belongs to the adenoviridae hexon-interlacing protein family. Homotrimer. Interacts with hexon protein; this interaction tethers the hexons together. Self-interacts with adjacent proteins. Interacts with kinesin light chain KLC1; this interaction leads to capsid disruption at the nuclear pore complex during virus entry into host cell.

It is found in the virion. Its subcellular location is the host nucleus. Its function is as follows. Structural component of the virion that acts as a cement protein on the capsid exterior and forms triskelion structures consisting of three molecules that stabilize three hexon trimers at the center of each icosahedral facet and fixes the peripentonal hexons. Dispensable for assembly. During virus entry, recruits the anterograde motor kinesin-1 to the capsid docked at the nuclear pore complex thereby subjecting the docked capsid to a pulling force. The resulting tension leads to capsid disruption, dispersion of capsid fragments toward cell periphery and eventually viral DNA entry into the host nucleus. The protein is Hexon-interlacing protein of Tupaiidae (tree shrews).